A 610-amino-acid chain; its full sequence is Threonine--tRNA ligase (610 aa).

The tract at residues 1–29 (MANHDQQTVSSAAATTSASPSPVVLPKTS) is disordered. The segment covering 8 to 24 (TVSSAAATTSASPSPVV) has biased composition (low complexity). The tract at residues 209–502 (DHRRIGKDLD…MTENYAGDYP (294 aa)) is catalytic. The Zn(2+) site is built by Cys302, His353, and His479.

This sequence belongs to the class-II aminoacyl-tRNA synthetase family. As to quaternary structure, homodimer. Zn(2+) is required as a cofactor.

It is found in the cytoplasm. The enzyme catalyses tRNA(Thr) + L-threonine + ATP = L-threonyl-tRNA(Thr) + AMP + diphosphate + H(+). Functionally, catalyzes the attachment of threonine to tRNA(Thr) in a two-step reaction: L-threonine is first activated by ATP to form Thr-AMP and then transferred to the acceptor end of tRNA(Thr). Also edits incorrectly charged L-seryl-tRNA(Thr). This chain is Threonine--tRNA ligase, found in Synechococcus sp. (strain WH7803).